A 668-amino-acid chain; its full sequence is tRNA 5-methylaminomethyl-2-thiouridine biosynthesis bifunctional protein MnmC (668 aa).

The segment at 1-245 (MKHYSIQPAN…KREMLCGVME (245 aa)) is tRNA (mnm(5)s(2)U34)-methyltransferase. The segment at 270–668 (IGGGIASALL…LLKGKAVKAG (399 aa)) is FAD-dependent cmnm(5)s(2)U34 oxidoreductase.

In the N-terminal section; belongs to the methyltransferase superfamily. tRNA (mnm(5)s(2)U34)-methyltransferase family. The protein in the C-terminal section; belongs to the DAO family. Requires FAD as cofactor.

Its subcellular location is the cytoplasm. It catalyses the reaction 5-aminomethyl-2-thiouridine(34) in tRNA + S-adenosyl-L-methionine = 5-methylaminomethyl-2-thiouridine(34) in tRNA + S-adenosyl-L-homocysteine + H(+). Its function is as follows. Catalyzes the last two steps in the biosynthesis of 5-methylaminomethyl-2-thiouridine (mnm(5)s(2)U) at the wobble position (U34) in tRNA. Catalyzes the FAD-dependent demodification of cmnm(5)s(2)U34 to nm(5)s(2)U34, followed by the transfer of a methyl group from S-adenosyl-L-methionine to nm(5)s(2)U34, to form mnm(5)s(2)U34. In Shigella flexneri serotype 5b (strain 8401), this protein is tRNA 5-methylaminomethyl-2-thiouridine biosynthesis bifunctional protein MnmC.